Consider the following 234-residue polypeptide: Synaptogyrin-1 (234 aa).

At M1 the chain carries N-acetylmethionine. Residues 1–23 lie on the Cytoplasmic side of the membrane; sequence MEGGAYGAGKAGGAFDPYTLVRQ. Residues 20–173 form the MARVEL domain; the sequence is LVRQPHTILR…QAVLAFQRYQ (154 aa). Residues 24-44 form a helical membrane-spanning segment; sequence PHTILRVVSWVFSIVVFGSIV. The Lumenal portion of the chain corresponds to 45–71; sequence NEGYLNNPEEEEEFCIYNRNPNACSYG. The helical transmembrane segment at 72–92 threads the bilayer; sequence VTVGVLAFLTCLLYLALDVYF. Residues 93–103 lie on the Cytoplasmic side of the membrane; sequence PQISSVKDRKK. A helical membrane pass occupies residues 104 to 124; sequence AVLSDIGVSAFWAFFWFVGFC. The Lumenal segment spans residues 125 to 148; the sequence is FLANQWQVSKPKDNPLNEGTDAAR. Residues 149 to 169 traverse the membrane as a helical segment; the sequence is AAIAFSFFSIFTWAGQAVLAF. Topologically, residues 170-234 are cytoplasmic; sequence QRYQIGADSA…EPQGYQSQGY (65 aa). The disordered stretch occupies residues 201–234; that stretch reads EPSAGSDPAGMGGTYQHPANAFDAEPQGYQSQGY.

This sequence belongs to the synaptogyrin family.

It is found in the cytoplasmic vesicle. The protein localises to the secretory vesicle. The protein resides in the synaptic vesicle membrane. Its subcellular location is the melanosome. In terms of biological role, may play a role in regulated exocytosis. Modulates the localization of synaptophysin/SYP into synaptic-like microvesicles and may therefore play a role in synaptic-like microvesicle formation and/or maturation. Involved in the regulation of short-term and long-term synaptic plasticity. The polypeptide is Synaptogyrin-1 (Mus musculus (Mouse)).